The sequence spans 360 residues: Phenylalanine--tRNA ligase alpha subunit (360 aa).

Glutamate 260 contacts Mg(2+).

This sequence belongs to the class-II aminoacyl-tRNA synthetase family. Phe-tRNA synthetase alpha subunit type 1 subfamily. Tetramer of two alpha and two beta subunits. Mg(2+) serves as cofactor.

Its subcellular location is the cytoplasm. It catalyses the reaction tRNA(Phe) + L-phenylalanine + ATP = L-phenylalanyl-tRNA(Phe) + AMP + diphosphate + H(+). This chain is Phenylalanine--tRNA ligase alpha subunit, found in Sinorhizobium fredii (strain NBRC 101917 / NGR234).